A 434-amino-acid polypeptide reads, in one-letter code: Glutamate-1-semialdehyde 2,1-aminomutase (434 aa).

Lys-271 is modified (N6-(pyridoxal phosphate)lysine).

This sequence belongs to the class-III pyridoxal-phosphate-dependent aminotransferase family. HemL subfamily. Homodimer. Pyridoxal 5'-phosphate serves as cofactor.

It is found in the cytoplasm. The catalysed reaction is (S)-4-amino-5-oxopentanoate = 5-aminolevulinate. The protein operates within porphyrin-containing compound metabolism; protoporphyrin-IX biosynthesis; 5-aminolevulinate from L-glutamyl-tRNA(Glu): step 2/2. Its pathway is porphyrin-containing compound metabolism; chlorophyll biosynthesis. The chain is Glutamate-1-semialdehyde 2,1-aminomutase from Prochlorococcus marinus (strain MIT 9312).